Here is an 85-residue protein sequence, read N- to C-terminus: RNA-binding protein Hfq (85 aa).

Positions 9–68 (DPFLNELRKEKVPVSVFLVNGIKLHGIIDSFDQYVVMLKNSITQMVYKHAISTVVPSRMV) constitute a Sm domain.

This sequence belongs to the Hfq family. As to quaternary structure, homohexamer.

RNA chaperone that binds small regulatory RNA (sRNAs) and mRNAs to facilitate mRNA translational regulation in response to envelope stress, environmental stress and changes in metabolite concentrations. Also binds with high specificity to tRNAs. The chain is RNA-binding protein Hfq from Legionella pneumophila (strain Paris).